Consider the following 396-residue polypeptide: Maltose/maltodextrin-binding periplasmic protein (396 aa).

The first 26 residues, 1–26 (MKIKTGARILALSALTTMMFSASALA), serve as a signal peptide directing secretion.

This sequence belongs to the bacterial solute-binding protein 1 family. As to quaternary structure, the complex is composed of two ATP-binding proteins (MalK), two transmembrane proteins (MalG and MalF) and a solute-binding protein (MalE).

It is found in the periplasm. In terms of biological role, part of the ABC transporter complex MalEFGK involved in maltose/maltodextrin import. Binds maltose and higher maltodextrins. The chain is Maltose/maltodextrin-binding periplasmic protein (malE) from Escherichia coli O157:H7.